Consider the following 385-residue polypeptide: Leucine aminopeptidase 1 (385 aa).

The N-terminal stretch at 1-19 (MKFPSFLSLGIAASTTALA) is a signal peptide. The propeptide occupies 20–87 (ALPDQKPIGD…FPRAFAKTAV (68 aa)). A glycan (N-linked (GlcNAc...) asparagine) is linked at Asn-177. 2 residues coordinate Zn(2+): His-185 and Asp-204. The N-linked (GlcNAc...) asparagine glycan is linked to Asn-229. Zn(2+) contacts are provided by Glu-243 and Asp-270. The cysteines at positions 319 and 323 are disulfide-linked. His-352 is a binding site for Zn(2+).

This sequence belongs to the peptidase M28 family. M28E subfamily. In terms of assembly, monomer. Zn(2+) is required as a cofactor.

The protein localises to the secreted. Extracellular aminopeptidase that allows assimilation of proteinaceous substrates. The protein is Leucine aminopeptidase 1 (LAP1) of Blastomyces gilchristii (strain SLH14081) (Blastomyces dermatitidis).